A 72-amino-acid polypeptide reads, in one-letter code: Cytochrome c oxidase subunit 2 (72 aa).

Residues 1–14 (MAHPSQLGFQDAAS) lie on the Mitochondrial intermembrane side of the membrane. The helical transmembrane segment at 15–45 (PVMEELLHFHDHALMIVFLISTLVLYIIVAM) threads the bilayer. Residues 46 to 72 (VSTKLTNKHILDSQEVEIVWTILPAVI) lie on the Mitochondrial matrix side of the membrane.

This sequence belongs to the cytochrome c oxidase subunit 2 family. Component of the cytochrome c oxidase (complex IV, CIV), a multisubunit enzyme composed of 14 subunits. The complex is composed of a catalytic core of 3 subunits MT-CO1, MT-CO2 and MT-CO3, encoded in the mitochondrial DNA, and 11 supernumerary subunits COX4I, COX5A, COX5B, COX6A, COX6B, COX6C, COX7A, COX7B, COX7C, COX8 and NDUFA4, which are encoded in the nuclear genome. The complex exists as a monomer or a dimer and forms supercomplexes (SCs) in the inner mitochondrial membrane with NADH-ubiquinone oxidoreductase (complex I, CI) and ubiquinol-cytochrome c oxidoreductase (cytochrome b-c1 complex, complex III, CIII), resulting in different assemblies (supercomplex SCI(1)III(2)IV(1) and megacomplex MCI(2)III(2)IV(2)). Found in a complex with TMEM177, COA6, COX18, COX20, SCO1 and SCO2. Interacts with TMEM177 in a COX20-dependent manner. Interacts with COX20. Interacts with COX16. It depends on Cu cation as a cofactor.

The protein localises to the mitochondrion inner membrane. The enzyme catalyses 4 Fe(II)-[cytochrome c] + O2 + 8 H(+)(in) = 4 Fe(III)-[cytochrome c] + 2 H2O + 4 H(+)(out). Its function is as follows. Component of the cytochrome c oxidase, the last enzyme in the mitochondrial electron transport chain which drives oxidative phosphorylation. The respiratory chain contains 3 multisubunit complexes succinate dehydrogenase (complex II, CII), ubiquinol-cytochrome c oxidoreductase (cytochrome b-c1 complex, complex III, CIII) and cytochrome c oxidase (complex IV, CIV), that cooperate to transfer electrons derived from NADH and succinate to molecular oxygen, creating an electrochemical gradient over the inner membrane that drives transmembrane transport and the ATP synthase. Cytochrome c oxidase is the component of the respiratory chain that catalyzes the reduction of oxygen to water. Electrons originating from reduced cytochrome c in the intermembrane space (IMS) are transferred via the dinuclear copper A center (CU(A)) of subunit 2 and heme A of subunit 1 to the active site in subunit 1, a binuclear center (BNC) formed by heme A3 and copper B (CU(B)). The BNC reduces molecular oxygen to 2 water molecules using 4 electrons from cytochrome c in the IMS and 4 protons from the mitochondrial matrix. The protein is Cytochrome c oxidase subunit 2 (mt-co2) of Atractosteus spatula (Alligator gar).